Consider the following 338-residue polypeptide: mRNA decay activator protein ZFP36L1 (338 aa).

The interval 1–111 is necessary and sufficient for the association with mRNA decay enzymes and mRNA decay activation; that stretch reads MTTTLVSATI…QKQPGGGQVN (111 aa). Ser-54 is subject to Phosphoserine; by MAPKAPK2. Ser-90 is subject to Phosphoserine; by PKB/AKT1. Ser-92 bears the Phosphoserine; by PKB/AKT1 and MAPKAPK2 mark. The segment at 93 to 113 is disordered; sequence EGGERLLPTQKQPGGGQVNSS. C3H1-type zinc fingers lie at residues 114 to 142 and 152 to 180; these read RYKTELCRPFEENGACKYGDKCQFAHGIH and KYKTELCRTFHTIGFCPYGPRCHFIHNAE. The necessary for mRNA decay activation stretch occupies residues 185 to 338; the sequence is LAGARDLSAD…IFSRLSISDD (154 aa). Ser-203 is modified (phosphoserine; by PKB/AKT1 and MAPKAPK2). The tract at residues 273-338 is disordered; it reads SPTTFLFRPM…IFSRLSISDD (66 aa). Residues 296 to 318 show a composition bias toward low complexity; it reads QDSLSDQEGYLSSSSSSHSGSDS. Ser-318 carries the post-translational modification Phosphoserine. Ser-334 carries the phosphoserine; by RPS6KA1 modification.

Associates with the cytoplasmic CCR4-NOT deadenylase and RNA exosome complexes to trigger ARE-containing mRNA deadenylation and decay processes. Interacts with CNOT1. Interacts (via N-terminus) with CNOT6. Interacts with CNOT7; this interaction is inhibited in response to phorbol 12-myristate 13-acetate (PMA) treatment in a p38 MAPK-dependent manner. Interacts with DCP1A. Interacts (via N-terminus) with DCP2. Interacts (via N-terminus) with EXOSC2. Interacts with XRN1. Interacts (via phosphorylated form) with YWHAB; this interaction occurs in a protein kinase AKT1-dependent manner. Interacts (via phosphorylated form) with YWHAZ; this interaction occurs in a p38 MAPK- and AKT-signaling pathways. In terms of processing, phosphorylated. Phosphorylated by RPS6KA1 at Ser-334 upon phorbol 12-myristate 13-acetate (PMA) treatment; this phosphorylation results in dissociation of the CCR4-NOT deadenylase complex and induces p38 MAPK-mediated stabilization of the low-density lipoprotein receptor LDLR mRNA. Phosphorylated by protein kinase AKT1 at Ser-92 and Ser-203 in response to insulin; these phosphorylations stabilize ZFP36L1, increase the association with 14-3-3 proteins and mediate ARE-containing mRNA stabilization. AKT1-mediated phosphorylation at Ser-92 does not impair ARE-containing RNA-binding. Phosphorylated at Ser-54, Ser-92 and Ser-203 by MAPKAPK2; these phosphorylations increase the association with 14-3-3 proteins and mediate ARE-containing mRNA stabilization in a protein kinase AKT1-independent manner. MAPKAPK2-mediated phosphorylations at Ser-54, Ser-92 and Ser-203 do not impair ARE-containing RNA-binding. Phosphorylations increase the association with 14-3-3 proteins and mediate ARE-containing mRNA stabilization during early adipogenesis in a p38 MAPK- and AKT-dependent manner. Post-translationally, ubiquitinated. Ubiquitination leads to proteasomal degradation, a process inhibited by phosphorylations at Ser-90, Ser-92 and Ser-203. As to expression, expressed mainly in the basal epidermal layer, weakly in the suprabasal epidermal layers. Expressed in epidermal keratinocytes (at protein level). Expressed in osteoblasts.

The protein localises to the nucleus. Its subcellular location is the cytoplasm. It is found in the cytoplasmic granule. The protein resides in the P-body. Functionally, zinc-finger RNA-binding protein that destabilizes several cytoplasmic AU-rich element (ARE)-containing mRNA transcripts by promoting their poly(A) tail removal or deadenylation, and hence provide a mechanism for attenuating protein synthesis. Acts as a 3'-untranslated region (UTR) ARE mRNA-binding adapter protein to communicate signaling events to the mRNA decay machinery. Functions by recruiting the CCR4-NOT deadenylase complex and components of the cytoplasmic RNA decay machinery to the bound ARE-containing mRNAs, and hence promotes ARE-mediated mRNA deadenylation and decay processes. Also induces the degradation of ARE-containing mRNAs even in absence of poly(A) tail. Binds to 3'-UTR ARE of numerous mRNAs. Positively regulates early adipogenesis by promoting ARE-mediated mRNA decay of immediate early genes (IEGs). Promotes ARE-mediated mRNA decay of mineralocorticoid receptor NR3C2 mRNA in response to hypertonic stress. Negatively regulates hematopoietic/erythroid cell differentiation by promoting ARE-mediated mRNA decay of the transcription factor STAT5B mRNA. Positively regulates monocyte/macrophage cell differentiation by promoting ARE-mediated mRNA decay of the cyclin-dependent kinase CDK6 mRNA. Promotes degradation of ARE-containing pluripotency-associated mRNAs in embryonic stem cells (ESCs), such as NANOG, through a fibroblast growth factor (FGF)-induced MAPK-dependent signaling pathway, and hence attenuates ESC self-renewal and positively regulates mesendoderm differentiation. May play a role in mediating pro-apoptotic effects in malignant B-cells by promoting ARE-mediated mRNA decay of BCL2 mRNA. In association with ZFP36L2 maintains quiescence on developing B lymphocytes by promoting ARE-mediated decay of several mRNAs encoding cell cycle regulators that help B cells progress through the cell cycle, and hence ensuring accurate variable-diversity-joining (VDJ) recombination and functional immune cell formation. Together with ZFP36L2 is also necessary for thymocyte development and prevention of T-cell acute lymphoblastic leukemia (T-ALL) transformation by promoting ARE-mediated mRNA decay of the oncogenic transcription factor NOTCH1 mRNA. Participates in the delivery of target ARE-mRNAs to processing bodies (PBs). In addition to its cytosolic mRNA-decay function, plays a role in the regulation of nuclear mRNA 3'-end processing; modulates mRNA 3'-end maturation efficiency of the DLL4 mRNA through binding with an ARE embedded in a weak noncanonical polyadenylation (poly(A)) signal in endothelial cells. Also involved in the regulation of stress granule (SG) and P-body (PB) formation and fusion. Plays a role in vasculogenesis and endocardial development. Plays a role in the regulation of keratinocyte proliferation, differentiation and apoptosis. Plays a role in myoblast cell differentiation. This Homo sapiens (Human) protein is mRNA decay activator protein ZFP36L1.